A 396-amino-acid chain; its full sequence is L-cysteine desulfidase (396 aa).

The active-site Proton acceptor is Cys23. 3 residues coordinate [4Fe-4S] cluster: Cys288, Cys330, and Cys337.

This sequence belongs to the L-cysteine desulfidase family. As to quaternary structure, homotrimer. The cofactor is [4Fe-4S] cluster.

It catalyses the reaction L-cysteine + H2O = hydrogen sulfide + pyruvate + NH4(+) + H(+). Functionally, catalyzes the cleavage of L-cysteine to form 2-aminoprop-2-enoate and sulfide. The former then spontaneously hydrolyzes to pyruvate and NH(3). May be responsible for the production of sulfide required for the biosynthesis of iron-sulfur centers in this archaea. The protein is L-cysteine desulfidase of Methanococcus maripaludis (strain C6 / ATCC BAA-1332).